Here is a 293-residue protein sequence, read N- to C-terminus: 4-hydroxy-tetrahydrodipicolinate synthase (293 aa).

Residue threonine 45 participates in pyruvate binding. Tyrosine 133 serves as the catalytic Proton donor/acceptor. The active-site Schiff-base intermediate with substrate is lysine 161. Isoleucine 203 contacts pyruvate.

It belongs to the DapA family. As to quaternary structure, homotetramer; dimer of dimers.

It localises to the cytoplasm. The enzyme catalyses L-aspartate 4-semialdehyde + pyruvate = (2S,4S)-4-hydroxy-2,3,4,5-tetrahydrodipicolinate + H2O + H(+). It functions in the pathway amino-acid biosynthesis; L-lysine biosynthesis via DAP pathway; (S)-tetrahydrodipicolinate from L-aspartate: step 3/4. Functionally, catalyzes the condensation of (S)-aspartate-beta-semialdehyde [(S)-ASA] and pyruvate to 4-hydroxy-tetrahydrodipicolinate (HTPA). The chain is 4-hydroxy-tetrahydrodipicolinate synthase from Shewanella piezotolerans (strain WP3 / JCM 13877).